The primary structure comprises 274 residues: F-actin-capping protein subunit alpha (274 aa).

Belongs to the F-actin-capping protein alpha subunit family. As to quaternary structure, heterodimer of an alpha and a beta subunit.

Its subcellular location is the cytoplasm. F-actin-capping proteins bind in a Ca(2+)-independent manner to the fast growing ends of actin filaments (barbed end) thereby blocking the exchange of subunits at these ends. Unlike other capping proteins (such as gelsolin and severin), these proteins do not sever actin filaments. The polypeptide is F-actin-capping protein subunit alpha (Chaetomium thermophilum (strain DSM 1495 / CBS 144.50 / IMI 039719) (Thermochaetoides thermophila)).